We begin with the raw amino-acid sequence, 306 residues long: Polyisoprenyl-teichoic acid--peptidoglycan teichoic acid transferase TagU (306 aa).

The Cytoplasmic segment spans residues 1–11 (MRAEKRKKKKK). A helical; Signal-anchor for type II membrane protein membrane pass occupies residues 12-32 (ILYTIIALIGIFVLSTGSYAY). Over 33 to 306 (YLWHKAASTV…TAELKESLNK (274 aa)) the chain is Extracellular.

It belongs to the LytR/CpsA/Psr (LCP) family.

The protein resides in the cell membrane. It participates in cell wall biogenesis. In terms of biological role, may catalyze the final step in cell wall teichoic acid biosynthesis, the transfer of the anionic cell wall polymers (APs) from their lipid-linked precursor to the cell wall peptidoglycan (PG). This Bacillus licheniformis (strain ATCC 14580 / DSM 13 / JCM 2505 / CCUG 7422 / NBRC 12200 / NCIMB 9375 / NCTC 10341 / NRRL NRS-1264 / Gibson 46) protein is Polyisoprenyl-teichoic acid--peptidoglycan teichoic acid transferase TagU.